The chain runs to 393 residues: Formate-dependent phosphoribosylglycinamide formyltransferase (393 aa).

N(1)-(5-phospho-beta-D-ribosyl)glycinamide-binding positions include E22 to L23 and E82. Residues R114, K155, S160–Q165, E195–V198, and E203 contribute to the ATP site. The region spanning R119–L308 is the ATP-grasp domain. Mg(2+)-binding residues include E267 and E279. N(1)-(5-phospho-beta-D-ribosyl)glycinamide contacts are provided by residues D286, K356, and R363–R364.

It belongs to the PurK/PurT family. As to quaternary structure, homodimer.

The enzyme catalyses N(1)-(5-phospho-beta-D-ribosyl)glycinamide + formate + ATP = N(2)-formyl-N(1)-(5-phospho-beta-D-ribosyl)glycinamide + ADP + phosphate + H(+). Its pathway is purine metabolism; IMP biosynthesis via de novo pathway; N(2)-formyl-N(1)-(5-phospho-D-ribosyl)glycinamide from N(1)-(5-phospho-D-ribosyl)glycinamide (formate route): step 1/1. In terms of biological role, involved in the de novo purine biosynthesis. Catalyzes the transfer of formate to 5-phospho-ribosyl-glycinamide (GAR), producing 5-phospho-ribosyl-N-formylglycinamide (FGAR). Formate is provided by PurU via hydrolysis of 10-formyl-tetrahydrofolate. This chain is Formate-dependent phosphoribosylglycinamide formyltransferase, found in Solidesulfovibrio magneticus (strain ATCC 700980 / DSM 13731 / RS-1) (Desulfovibrio magneticus).